We begin with the raw amino-acid sequence, 186 residues long: UPF0301 protein Tgr7_2910 (186 aa).

The protein belongs to the UPF0301 (AlgH) family.

The polypeptide is UPF0301 protein Tgr7_2910 (Thioalkalivibrio sulfidiphilus (strain HL-EbGR7)).